A 226-amino-acid chain; its full sequence is Chalcone--flavanone isomerase 1 (226 aa).

Thr-52, Asn-117, and Thr-194 together coordinate substrate.

Belongs to the chalcone isomerase family.

It carries out the reaction a chalcone = a flavanone.. Its pathway is secondary metabolite biosynthesis; flavonoid biosynthesis. Catalyzes the intramolecular cyclization of bicyclic chalcones into tricyclic (S)-flavanones. Responsible for the isomerization of 4,2',4',6'-tetrahydroxychalcone (also termed chalcone) into naringenin. This Lotus japonicus (Lotus corniculatus var. japonicus) protein is Chalcone--flavanone isomerase 1 (CHI1).